A 154-amino-acid polypeptide reads, in one-letter code: Ribosomal RNA large subunit methyltransferase H (154 aa).

Gly-103 contacts S-adenosyl-L-methionine.

Belongs to the RNA methyltransferase RlmH family. In terms of assembly, homodimer.

The protein localises to the cytoplasm. It carries out the reaction pseudouridine(1915) in 23S rRNA + S-adenosyl-L-methionine = N(3)-methylpseudouridine(1915) in 23S rRNA + S-adenosyl-L-homocysteine + H(+). Functionally, specifically methylates the pseudouridine at position 1915 (m3Psi1915) in 23S rRNA. The protein is Ribosomal RNA large subunit methyltransferase H of Gemmatimonas aurantiaca (strain DSM 14586 / JCM 11422 / NBRC 100505 / T-27).